Consider the following 136-residue polypeptide: Histone H3.1t (136 aa).

Positions 1-43 (MARTKQTARKSTGGKAPRKQLATKVARKSAPATGGVKKPHRYR) are disordered. R3 is subject to Asymmetric dimethylarginine; by PRMT6; alternate. R3 carries the post-translational modification Citrulline; alternate. T4 carries the post-translational modification Phosphothreonine; by HASPIN. K5 bears the Allysine; alternate mark. The residue at position 5 (K5) is an N6,N6,N6-trimethyllysine; alternate. The residue at position 5 (K5) is an N6,N6-dimethyllysine; alternate. N6-(2-hydroxyisobutyryl)lysine; alternate is present on K5. K5 is subject to N6-(beta-hydroxybutyryl)lysine; alternate. An N6-acetyllysine; alternate modification is found at K5. N6-methyllysine; alternate is present on K5. The residue at position 6 (Q6) is a 5-glutamyl dopamine; alternate. The residue at position 6 (Q6) is a 5-glutamyl serotonin; alternate. A Phosphothreonine; by PKC modification is found at T7. The residue at position 9 (R9) is a Citrulline; alternate. Position 9 is a symmetric dimethylarginine; by PRMT5; alternate (R9). K10 is modified (N6,N6,N6-trimethyllysine; alternate). An N6,N6-dimethyllysine; alternate modification is found at K10. K10 is modified (N6-(2-hydroxyisobutyryl)lysine; alternate). At K10 the chain carries N6-(beta-hydroxybutyryl)lysine; alternate. The residue at position 10 (K10) is an N6-acetyllysine; alternate. Position 10 is an N6-methyllysine; alternate (K10). K10 bears the N6-lactoyllysine; alternate mark. S11 is subject to ADP-ribosylserine; alternate. A Phosphoserine; alternate; by AURKB, AURKC, RPS6KA3, RPS6KA4 and RPS6KA5 modification is found at S11. T12 bears the Phosphothreonine; by PKC mark. Residue K15 is modified to N6-(2-hydroxyisobutyryl)lysine; alternate. The residue at position 15 (K15) is an N6-(beta-hydroxybutyryl)lysine; alternate. K15 is subject to N6-acetyllysine; alternate. K15 carries the N6-lactoyllysine; alternate modification. Residue K15 is modified to N6-glutaryllysine; alternate. K15 carries the post-translational modification N6-succinyllysine; alternate. Residue R18 is modified to Citrulline; alternate. An Asymmetric dimethylarginine; by CARM1; alternate modification is found at R18. Residues K19 and K24 each carry the N6-(2-hydroxyisobutyryl)lysine; alternate modification. An N6-(beta-hydroxybutyryl)lysine; alternate mark is found at K19 and K24. Residues K19 and K24 each carry the N6-acetyllysine; alternate modification. K19 and K24 each carry N6-methyllysine; alternate. An N6-lactoyllysine; alternate mark is found at K19 and K24. K19 and K24 each carry N6-glutaryllysine; alternate. N6-butyryllysine; alternate is present on residues K19 and K24. The residue at position 27 (R27) is a Citrulline. K28 is subject to N6,N6,N6-trimethyllysine; alternate. An N6,N6-dimethyllysine; alternate modification is found at K28. Position 28 is an N6-(2-hydroxyisobutyryl)lysine; alternate (K28). Position 28 is an N6-acetyllysine; alternate (K28). N6-methyllysine; alternate is present on K28. K28 bears the N6-lactoyllysine; alternate mark. An N6-glutaryllysine; alternate modification is found at K28. At S29 the chain carries ADP-ribosylserine; alternate. A Phosphoserine; alternate; by AURKB, AURKC and RPS6KA5 modification is found at S29. K37 carries the N6,N6,N6-trimethyllysine; alternate modification. At K37 the chain carries N6,N6-dimethyllysine; alternate. K37 carries the N6-(2-hydroxyisobutyryl)lysine; alternate modification. K37 is modified (N6-acetyllysine; alternate). N6-methyllysine; alternate is present on K37. Residue K38 is modified to N6-methyllysine. Phosphotyrosine is present on Y42. K57 carries the N6,N6,N6-trimethyllysine; alternate modification. K57 is modified (N6-(2-hydroxyisobutyryl)lysine; alternate). At K57 the chain carries N6-(beta-hydroxybutyryl)lysine; alternate. K57 carries the post-translational modification N6-acetyllysine; alternate. At K57 the chain carries N6-lactoyllysine; alternate. K57 carries the N6-glutaryllysine; alternate modification. K57 bears the N6-succinyllysine; alternate mark. Residue K57 is modified to N6-methyllysine; by EHMT2; alternate. Phosphoserine is present on S58. N6-(2-hydroxyisobutyryl)lysine; alternate occurs at positions 65 and 80. K65 and K80 each carry N6-methyllysine; alternate. At K80 the chain carries N6,N6,N6-trimethyllysine; alternate. K80 is subject to N6,N6-dimethyllysine; alternate. K80 carries the N6-acetyllysine; alternate modification. K80 is subject to N6-lactoyllysine; alternate. Position 80 is an N6-glutaryllysine; alternate (K80). Position 80 is an N6-succinyllysine; alternate (K80). T81 carries the phosphothreonine modification. S87 is subject to Phosphoserine. At T108 the chain carries Phosphothreonine. Residues K116 and K123 each carry the N6-acetyllysine; alternate modification. K116 and K123 each carry N6-glutaryllysine; alternate. The residue at position 123 (K123) is an N6-(2-hydroxyisobutyryl)lysine; alternate. At K123 the chain carries N6-methyllysine; alternate. K123 carries the post-translational modification N6-succinyllysine; alternate.

This sequence belongs to the histone H3 family. The nucleosome is a histone octamer containing two molecules each of H2A, H2B, H3 and H4 assembled in one H3-H4 heterotetramer and two H2A-H2B heterodimers. The octamer wraps approximately 147 bp of DNA. Interacts with TONSL; CHAF1A and CHAF1B. Post-translationally, acetylation is generally linked to gene activation. Acetylation on Lys-10 (H3K9ac) impairs methylation at Arg-9 (H3R8me2s). Acetylation on Lys-19 (H3K18ac) and Lys-24 (H3K24ac) favors methylation at Arg-18 (H3R17me). Acetylation at Lys-123 (H3K122ac) by EP300/p300 plays a central role in chromatin structure: localizes at the surface of the histone octamer and stimulates transcription, possibly by promoting nucleosome instability. In terms of processing, citrullination at Arg-9 (H3R8ci) and/or Arg-18 (H3R17ci) by PADI4 impairs methylation and represses transcription. Asymmetric dimethylation at Arg-18 (H3R17me2a) by CARM1 is linked to gene activation. Symmetric dimethylation at Arg-9 (H3R8me2s) by PRMT5 is linked to gene repression. Asymmetric dimethylation at Arg-3 (H3R2me2a) by PRMT6 is linked to gene repression and is mutually exclusive with H3 Lys-5 methylation (H3K4me2 and H3K4me3). H3R2me2a is present at the 3' of genes regardless of their transcription state and is enriched on inactive promoters, while it is absent on active promoters. Post-translationally, methylation at Lys-5 (H3K4me), Lys-37 (H3K36me) and Lys-80 (H3K79me) are linked to gene activation. Methylation at Lys-5 (H3K4me) facilitates subsequent acetylation of H3 and H4. Methylation at Lys-80 (H3K79me) is associated with DNA double-strand break (DSB) responses and is a specific target for TP53BP1. Methylation at Lys-10 (H3K9me) and Lys-28 (H3K27me) are linked to gene repression. Methylation at Lys-10 (H3K9me) is a specific target for HP1 proteins (CBX1, CBX3 and CBX5) and prevents subsequent phosphorylation at Ser-11 (H3S10ph) and acetylation of H3 and H4. Methylation at Lys-5 (H3K4me) and Lys-80 (H3K79me) require preliminary monoubiquitination of H2B at 'Lys-120'. Methylation at Lys-10 (H3K9me) and Lys-28 (H3K27me) are enriched in inactive X chromosome chromatin. Monomethylation at Lys-57 (H3K56me1) by EHMT2/G9A in G1 phase promotes interaction with PCNA and is required for DNA replication. In terms of processing, phosphorylated at Thr-4 (H3T3ph) by HASPIN during prophase and dephosphorylated during anaphase. Phosphorylation at Ser-11 (H3S10ph) by AURKB is crucial for chromosome condensation and cell-cycle progression during mitosis and meiosis. In addition phosphorylation at Ser-11 (H3S10ph) by RPS6KA4 and RPS6KA5 is important during interphase because it enables the transcription of genes following external stimulation, like mitogens, stress, growth factors or UV irradiation and result in the activation of genes, such as c-fos and c-jun. Phosphorylation at Ser-11 (H3S10ph), which is linked to gene activation, prevents methylation at Lys-10 (H3K9me) but facilitates acetylation of H3 and H4. Phosphorylation at Ser-11 (H3S10ph) by AURKB mediates the dissociation of HP1 proteins (CBX1, CBX3 and CBX5) from heterochromatin. Phosphorylation at Ser-11 (H3S10ph) is also an essential regulatory mechanism for neoplastic cell transformation. Phosphorylated at Ser-29 (H3S28ph) by MAP3K20 isoform 1, RPS6KA5 or AURKB during mitosis or upon ultraviolet B irradiation. Phosphorylation at Thr-7 (H3T6ph) by PRKCB is a specific tag for epigenetic transcriptional activation that prevents demethylation of Lys-5 (H3K4me) by LSD1/KDM1A. At centromeres, specifically phosphorylated at Thr-12 (H3T11ph) from prophase to early anaphase, by DAPK3 and PKN1. Phosphorylation at Thr-12 (H3T11ph) by PKN1 or isoform M2 of PKM (PKM2) is a specific tag for epigenetic transcriptional activation that promotes demethylation of Lys-10 (H3K9me) by KDM4C/JMJD2C. Phosphorylation at Tyr-42 (H3Y41ph) by JAK2 promotes exclusion of CBX5 (HP1 alpha) from chromatin. Ubiquitinated. Post-translationally, lysine deamination at Lys-5 (H3K4all) to form allysine is mediated by LOXL2. Allysine formation by LOXL2 only takes place on H3K4me3 and results in gene repression. In terms of processing, butyrylation of histones marks active promoters and competes with histone acetylation. It is present during late spermatogenesis. Succinylation at Lys-80 (H3K79succ) by KAT2A takes place with a maximum frequency around the transcription start sites of genes. It gives a specific tag for epigenetic transcription activation. Desuccinylation at Lys-123 (H3K122succ) by SIRT7 in response to DNA damage promotes chromatin condensation and double-strand breaks (DSBs) repair. Post-translationally, serine ADP-ribosylation constitutes the primary form of ADP-ribosylation of proteins in response to DNA damage. Serine ADP-ribosylation at Ser-11 (H3S10ADPr) is mutually exclusive with phosphorylation at Ser-11 (H3S10ph) and impairs acetylation at Lys-10 (H3K9ac). As to expression, expressed in testicular cells.

Its subcellular location is the nucleus. The protein resides in the chromosome. In terms of biological role, core component of nucleosome. Nucleosomes wrap and compact DNA into chromatin, limiting DNA accessibility to the cellular machineries which require DNA as a template. Histones thereby play a central role in transcription regulation, DNA repair, DNA replication and chromosomal stability. DNA accessibility is regulated via a complex set of post-translational modifications of histones, also called histone code, and nucleosome remodeling. The polypeptide is Histone H3.1t (Homo sapiens (Human)).